A 343-amino-acid polypeptide reads, in one-letter code: E3 ubiquitin-protein ligase RNF113A (343 aa).

Position 2 is an N-acetylalanine (Ala-2). The interval 2–60 is important for interaction with SNRNP200/BRR2; the sequence is AEQLSPGKAVDQVCTFLFKKPGRKGAAGRRKRPACDPEPGESGSSSDEGCTVVRPEKKR. Position 6 is a phosphoserine (Ser-6). Residues 22-33 show a composition bias toward basic residues; that stretch reads PGRKGAAGRRKR. The disordered stretch occupies residues 22 to 96; it reads PGRKGAAGRR…EEEENEPESL (75 aa). Low complexity predominate over residues 41–50; that stretch reads GESGSSSDEG. An important for interaction with CXCR4 region spans residues 50–61; the sequence is GCTVVRPEKKRV. A phosphoserine mark is found at Ser-84 and Ser-85. Residues 84–93 show a composition bias toward acidic residues; the sequence is SSEEEEENEP. Residues 196–224 form a C3H1-type zinc finger; sequence DYQPDICKDYKETGFCGFGDSCKFLHDRS. Ser-253 is subject to Phosphoserine. Residues 262-300 form an RING-type zinc finger; sequence CFICRQSFQNPVVTKCRHYFCESCALQHFRTTPRCYVCD. The tract at residues 322 to 343 is disordered; that stretch reads ATGEGGASDLPEDPDEDAIPIT. Positions 331–343 are enriched in acidic residues; that stretch reads LPEDPDEDAIPIT.

As to quaternary structure, component of pre-catalytic and catalytic spliceosome complexes. Interacts (via N-terminus) with the spliceosome subunit SNRNP200/BRR2. Component of the minor spliceosome, which splices U12-type introns. Within this complex, interacts with SCNM1 and CRIPT. Ubiquitous.

Its subcellular location is the nucleus. The protein localises to the nucleus speckle. The enzyme catalyses S-ubiquitinyl-[E2 ubiquitin-conjugating enzyme]-L-cysteine + [acceptor protein]-L-lysine = [E2 ubiquitin-conjugating enzyme]-L-cysteine + N(6)-ubiquitinyl-[acceptor protein]-L-lysine.. Its pathway is protein modification; protein ubiquitination. Its function is as follows. Required for pre-mRNA splicing as component of the spliceosome. As a component of the minor spliceosome, involved in the splicing of U12-type introns in pre-mRNAs. E3 ubiquitin-protein ligase that catalyzes the transfer of ubiquitin onto target proteins. Catalyzes polyubiquitination of SNRNP200/BRR2 with non-canonical 'Lys-63'-linked polyubiquitin chains. Plays a role in DNA repair via its role in the synthesis of 'Lys-63'-linked polyubiquitin chains that recruit ALKBH3 and the ASCC complex to sites of DNA damage by alkylating agents. Ubiquitinates CXCR4, leading to its degradation, and thereby contributes to the termination of CXCR4 signaling. The polypeptide is E3 ubiquitin-protein ligase RNF113A (RNF113A) (Homo sapiens (Human)).